The primary structure comprises 171 residues: Ribosome maturation factor RimM (171 aa).

Positions Pro96–Leu170 constitute a PRC barrel domain.

It belongs to the RimM family. Binds ribosomal protein uS19.

It localises to the cytoplasm. Its function is as follows. An accessory protein needed during the final step in the assembly of 30S ribosomal subunit, possibly for assembly of the head region. Essential for efficient processing of 16S rRNA. May be needed both before and after RbfA during the maturation of 16S rRNA. It has affinity for free ribosomal 30S subunits but not for 70S ribosomes. The chain is Ribosome maturation factor RimM from Heliobacterium modesticaldum (strain ATCC 51547 / Ice1).